The chain runs to 326 residues: MSTPDVVREAQSTEAYNPLAKQKAAAKLSRIPIKVEQGEVLKKPEWIRVKAGSPTTRFYEIKNILREHKLHTVCEEASCPNIGECFGRGTATFMIMGDKCTRRCPFCDVGHGRPDPLDKDEPLNLAKTIAALRLKYVVITSVDRDDLRDGGSGHFVECIQRTRELSPSTQIEILTPDFRGRDDRALEILKAAPPDVMNHNLETVPRLYKEARPGSDYQFSLNLLKKFKQLHPGVPTKSGLMVGLGETDEEILEVMRDMRAHGIEMLTIGQYLAPSNSHLPVRRYVHPDTFKMFEEEAYKMGFSHAAVGAMVRSSYHADQQAHAAGV.

Residues Cys-74, Cys-79, Cys-85, Cys-100, Cys-104, Cys-107, and Ser-314 each coordinate [4Fe-4S] cluster. The Radical SAM core domain occupies 85-303 (CFGRGTATFM…EEEAYKMGFS (219 aa)).

It belongs to the radical SAM superfamily. Lipoyl synthase family. [4Fe-4S] cluster serves as cofactor.

It localises to the cytoplasm. The catalysed reaction is [[Fe-S] cluster scaffold protein carrying a second [4Fe-4S](2+) cluster] + N(6)-octanoyl-L-lysyl-[protein] + 2 oxidized [2Fe-2S]-[ferredoxin] + 2 S-adenosyl-L-methionine + 4 H(+) = [[Fe-S] cluster scaffold protein] + N(6)-[(R)-dihydrolipoyl]-L-lysyl-[protein] + 4 Fe(3+) + 2 hydrogen sulfide + 2 5'-deoxyadenosine + 2 L-methionine + 2 reduced [2Fe-2S]-[ferredoxin]. The protein operates within protein modification; protein lipoylation via endogenous pathway; protein N(6)-(lipoyl)lysine from octanoyl-[acyl-carrier-protein]: step 2/2. Catalyzes the radical-mediated insertion of two sulfur atoms into the C-6 and C-8 positions of the octanoyl moiety bound to the lipoyl domains of lipoate-dependent enzymes, thereby converting the octanoylated domains into lipoylated derivatives. This is Lipoyl synthase from Acidovorax ebreus (strain TPSY) (Diaphorobacter sp. (strain TPSY)).